A 159-amino-acid polypeptide reads, in one-letter code: Ribosome maturation factor RimM (159 aa).

In terms of domain architecture, PRC barrel spans 86 to 159; that stretch reads SDAFHLPKLI…IHIETIEGLI (74 aa).

This sequence belongs to the RimM family. Binds ribosomal protein uS19.

It is found in the cytoplasm. Its function is as follows. An accessory protein needed during the final step in the assembly of 30S ribosomal subunit, possibly for assembly of the head region. Essential for efficient processing of 16S rRNA. May be needed both before and after RbfA during the maturation of 16S rRNA. It has affinity for free ribosomal 30S subunits but not for 70S ribosomes. This Acholeplasma laidlawii (strain PG-8A) protein is Ribosome maturation factor RimM.